We begin with the raw amino-acid sequence, 207 residues long: Suppressor of IKBKE 1 (207 aa).

Coiled coils occupy residues 4–32 (TIDKILQDAKTLLERLKDHDNAAESLIDQ) and 154–193 (DAIQLDEDKAYNIQEKLAQLELENKELREILSTSKESLHS). Residues 186 to 207 (TSKESLHSSKRESEWNFSEKTQ) are disordered. The segment covering 189-199 (ESLHSSKRESE) has biased composition (basic and acidic residues).

Belongs to the SIKE family. Interacts with IKBKE and TBK1 via its coiled coil region. Interaction with TBK1 is disrupted upon viral infection or TLR3 stimulation. Interacts with CDC42BPB. Associates with the STRIPAK core complex composed of PP2A catalytic and scaffolding subunits, the striatins (PP2A regulatory subunits), the striatin-associated proteins MOB4, STRIP1 and STRIP2, PDCD10 and members of the STE20 kinases, such as STK24 and STK26.

Its function is as follows. Suppressor of IKK-epsilon. Associates with the striatin-interacting phosphatase and kinase (STRIPAK) core complex, forming the extended (SIKE1:SLMAP)STRIPAK complex. The (SIKE1:SLMAP)STRIPAK complex dephosphorylates STK3 leading to the inhibition of Hippo signaling and the control of cell growth. This is Suppressor of IKBKE 1 (sike1) from Xenopus tropicalis (Western clawed frog).